Here is a 444-residue protein sequence, read N- to C-terminus: Deoxyguanosinetriphosphate triphosphohydrolase-like protein (444 aa).

The segment at 1–26 (MIASPWHERRLNEDKKRRNDHRSPFQ) is disordered. One can recognise an HD domain in the interval 59–250 (RLTHSLEVSQ…MELADDIAYA (192 aa)).

Belongs to the dGTPase family. Type 2 subfamily.

The protein is Deoxyguanosinetriphosphate triphosphohydrolase-like protein of Shewanella woodyi (strain ATCC 51908 / MS32).